The sequence spans 1939 residues: Myosin-8 (1939 aa).

The Myosin N-terminal SH3-like domain maps to 35 to 84; the sequence is DAKTSVFVAEPKASYVKSTIQSKEGGKVTVKTEGGATLTVREDQVFPMNP. Phosphothreonine is present on residues Thr66 and Thr71. Residues 88 to 783 enclose the Myosin motor domain; the sequence is DKIEDMAMMT…LLGLLEEMRD (696 aa). Lys132 bears the N6,N6,N6-trimethyllysine mark. ATP is bound at residue 181–188; it reads GESGAGKT. Tyr391 is subject to Phosphotyrosine. The residue at position 421 (Thr421) is a Phosphothreonine. Tyr426 is modified (phosphotyrosine). Phosphoserine is present on Ser627. Positions 660 to 682 are actin-binding; it reads LNKLMTNLRSTHPHFVRCIIPNE. His758 is subject to Pros-methylhistidine. The interval 762-776 is actin-binding; sequence KFGHTKVFFKAGLLG. Residues 783-815 enclose the IQ domain; that stretch reads DEKLSQIITRTQAVCRGFLMRVEYQKMLQRREA. A coiled-coil region spans residues 844–1939; the sequence is LLKSAETEKE…REVHTKISAE (1096 aa). Residues Ser1093, Ser1097, Ser1163, and Ser1238 each carry the phosphoserine modification. Thr1242 carries the phosphothreonine modification. Ser1244 is modified (phosphoserine). Phosphothreonine is present on Thr1256. Ser1262 is subject to Phosphoserine. Residues Thr1266 and Thr1287 each carry the phosphothreonine modification. Ser1293, Ser1304, and Ser1307 each carry phosphoserine. Position 1465 is a phosphotyrosine (Tyr1465). Residue Thr1468 is modified to Phosphothreonine. At Ser1475 the chain carries Phosphoserine. Phosphotyrosine is present on Tyr1493. The residue at position 1496 (Ser1496) is a Phosphoserine. Thr1502 bears the Phosphothreonine mark. A Phosphoserine modification is found at Ser1515. Thr1518 bears the Phosphothreonine mark. Ser1555, Ser1575, Ser1601, Ser1604, Ser1715, and Ser1727 each carry phosphoserine. At Thr1731 the chain carries Phosphothreonine. Ser1740 carries the post-translational modification Phosphoserine.

This sequence belongs to the TRAFAC class myosin-kinesin ATPase superfamily. Myosin family. In terms of assembly, muscle myosin is a hexameric protein that consists of 2 heavy chain subunits (MHC), 2 alkali light chain subunits (MLC) and 2 regulatory light chain subunits (MLC-2).

The protein resides in the cytoplasm. It localises to the myofibril. Its function is as follows. Muscle contraction. The chain is Myosin-8 (MYH8) from Canis lupus familiaris (Dog).